The following is a 495-amino-acid chain: MIIGYVVGSATTQEANVLLEKKVRSGYYVTLEYDDEKVLGLVTLITTGSPLVDDSLNDIELVQRIKQMGNKIPIYMKAKVKLLCKLDGKLSQPDLPPVAGTPVRLATNEELSTIFSEGTIRIGKLIGSDVEVRIRVNALTRHLAILAATGSGKSNTVAVLSSRLSEVFGSVLIFDYHGEYYESEIKNLNNIEPKINPLNLTPDEFATLLEIRENATIQYRILRRAFKSFLEETKEKLKNGNVNYNELNNNFRNLILKKVDEVSKNEKRKDSKDEVINKIEDFLDRYSEIIDFTAGDVVDKIKIGKVNVINLSSLDEDAIDAIVSHYLRKILTSRKENKMKRKIGLKFPVLVVIEEAHVLLSKDSNTLTKHWAGRIAREGRKFGVGLIIVSQRPKGIDENILSQMTNKIILKMVEPSDKKYVLETSDNLSEDIVEGLSALDTGEAVIVGNIVRMPAIVKIDKFEGKLAGSDPNLIEEWKKAKEEIEEHADVLNWGE.

ATP is bound by residues Arg-141, Gly-150–Asn-155, and Lys-458–Ile-459.

Belongs to the HerA family. As to quaternary structure, forms a hexamer or a heptamer. Interacts with Mre11.

The catalysed reaction is Couples ATP hydrolysis with the unwinding of duplex DNA at the replication fork by translocating in the 5'-3' direction. This creates two antiparallel DNA single strands (ssDNA). The leading ssDNA polymer is the template for DNA polymerase III holoenzyme which synthesizes a continuous strand.. The enzyme catalyses ATP + H2O = ADP + phosphate + H(+). It catalyses the reaction Couples ATP hydrolysis with the unwinding of duplex DNA by translocating in the 3'-5' direction.. Its activity is regulated as follows. ATPase activity is slightly stimulated by either circular single- or double-stranded (ds)DNA with a weak preference for dsDNA. Helicase activity is stimulated by Mre11. Its function is as follows. Involved in DNA double-strand break (DSB) repair. Probably acts with NurA to stimulate resection of the 5' strand and produce the long 3' single-strand that is required for RadA loading. Has DNA-dependent ATPase activity and bidirectional DNA helicase activity. Loads on either a 3' or a 5' DNA tail for subsequent DNA unwinding. Can also unwind blunt-ended dsDNA, Holliday junction and splayed-arm DNA. The sequence is that of DNA double-strand break repair helicase HerA from Sulfurisphaera tokodaii (strain DSM 16993 / JCM 10545 / NBRC 100140 / 7) (Sulfolobus tokodaii).